The chain runs to 194 residues: Putative manganese efflux pump MntP (194 aa).

6 consecutive transmembrane segments (helical) span residues 3–23 (PFSI…AAIG), 37–57 (LRAG…GWLL), 69–89 (DHWI…VAGL), 110–132 (LGLA…SLAF), 147–167 (CTFS…NLIG), and 172–192 (MLGG…HLSG).

It belongs to the MntP (TC 9.B.29) family.

The protein resides in the cell inner membrane. Functionally, probably functions as a manganese efflux pump. The protein is Putative manganese efflux pump MntP of Xanthomonas euvesicatoria pv. vesicatoria (strain 85-10) (Xanthomonas campestris pv. vesicatoria).